Consider the following 367-residue polypeptide: Methylthioribose-1-phosphate isomerase (367 aa).

Catalysis depends on Asp-250, which acts as the Proton donor.

This sequence belongs to the eIF-2B alpha/beta/delta subunits family. MtnA subfamily.

Its subcellular location is the cytoplasm. It localises to the nucleus. It carries out the reaction 5-(methylsulfanyl)-alpha-D-ribose 1-phosphate = 5-(methylsulfanyl)-D-ribulose 1-phosphate. The protein operates within amino-acid biosynthesis; L-methionine biosynthesis via salvage pathway; L-methionine from S-methyl-5-thio-alpha-D-ribose 1-phosphate: step 1/6. Functionally, catalyzes the interconversion of methylthioribose-1-phosphate (MTR-1-P) into methylthioribulose-1-phosphate (MTRu-1-P). The sequence is that of Methylthioribose-1-phosphate isomerase (IDI2) from Zea mays (Maize).